The following is a 122-amino-acid chain: Large ribosomal subunit protein uL14 (122 aa).

It belongs to the universal ribosomal protein uL14 family. As to quaternary structure, part of the 50S ribosomal subunit. Forms a cluster with proteins L3 and L19. In the 70S ribosome, L14 and L19 interact and together make contacts with the 16S rRNA in bridges B5 and B8.

Functionally, binds to 23S rRNA. Forms part of two intersubunit bridges in the 70S ribosome. The protein is Large ribosomal subunit protein uL14 of Limosilactobacillus reuteri (strain DSM 20016) (Lactobacillus reuteri).